Reading from the N-terminus, the 398-residue chain is 1-deoxy-D-xylulose 5-phosphate reductoisomerase (398 aa).

Residues threonine 14, glycine 15, serine 16, isoleucine 17, glutamine 42, and asparagine 128 each contribute to the NADPH site. Position 129 (lysine 129) interacts with 1-deoxy-D-xylulose 5-phosphate. Glutamate 130 is an NADPH binding site. Aspartate 154 is a binding site for Mn(2+). Residues serine 155, glutamate 156, serine 185, and histidine 208 each coordinate 1-deoxy-D-xylulose 5-phosphate. Residue glutamate 156 coordinates Mn(2+). NADPH is bound at residue glycine 214. Residues serine 221, asparagine 226, lysine 227, and glutamate 230 each contribute to the 1-deoxy-D-xylulose 5-phosphate site. A Mn(2+)-binding site is contributed by glutamate 230.

Belongs to the DXR family. Mg(2+) is required as a cofactor. Mn(2+) serves as cofactor.

The catalysed reaction is 2-C-methyl-D-erythritol 4-phosphate + NADP(+) = 1-deoxy-D-xylulose 5-phosphate + NADPH + H(+). It functions in the pathway isoprenoid biosynthesis; isopentenyl diphosphate biosynthesis via DXP pathway; isopentenyl diphosphate from 1-deoxy-D-xylulose 5-phosphate: step 1/6. Catalyzes the NADPH-dependent rearrangement and reduction of 1-deoxy-D-xylulose-5-phosphate (DXP) to 2-C-methyl-D-erythritol 4-phosphate (MEP). This chain is 1-deoxy-D-xylulose 5-phosphate reductoisomerase, found in Dechloromonas aromatica (strain RCB).